The following is a 375-amino-acid chain: N-acetylneuraminate epimerase (375 aa).

An N-terminal signal peptide occupies residues M1–A22. Kelch repeat units follow at residues T43–D87, K89–G140, K142–A176, A177–G222, L225–A273, K295–N344, and V346–E375. E231 (proton acceptor) is an active-site residue.

Belongs to the NanM family. Homodimer.

It is found in the periplasm. It carries out the reaction N-acetyl-alpha-neuraminate = N-acetyl-beta-neuraminate. In terms of biological role, converts alpha-N-acetylneuranimic acid (Neu5Ac) to the beta-anomer, accelerating the equilibrium between the alpha- and beta-anomers. Probably facilitates sialidase-negative bacteria to compete successfully for limited amounts of extracellular Neu5Ac, which is likely taken up in the beta-anomer. In addition, the rapid removal of sialic acid from solution might be advantageous to the bacterium to damp down host responses. This is N-acetylneuraminate epimerase from Haemophilus influenzae (strain PittEE).